The chain runs to 207 residues: Ribosome maturation factor RimP (207 aa).

Residues 171–207 (RAPGGAPEEGEEDTTEAAPEGAGKSPKPGRRPARKTH) are disordered. Basic residues predominate over residues 197–207 (KPGRRPARKTH).

The protein belongs to the RimP family.

The protein localises to the cytoplasm. In terms of biological role, required for maturation of 30S ribosomal subunits. In Gluconacetobacter diazotrophicus (strain ATCC 49037 / DSM 5601 / CCUG 37298 / CIP 103539 / LMG 7603 / PAl5), this protein is Ribosome maturation factor RimP.